Reading from the N-terminus, the 356-residue chain is S-adenosylmethionine:tRNA ribosyltransferase-isomerase (356 aa).

The protein belongs to the QueA family. Monomer.

The protein localises to the cytoplasm. It catalyses the reaction 7-aminomethyl-7-carbaguanosine(34) in tRNA + S-adenosyl-L-methionine = epoxyqueuosine(34) in tRNA + adenine + L-methionine + 2 H(+). It functions in the pathway tRNA modification; tRNA-queuosine biosynthesis. Transfers and isomerizes the ribose moiety from AdoMet to the 7-aminomethyl group of 7-deazaguanine (preQ1-tRNA) to give epoxyqueuosine (oQ-tRNA). This chain is S-adenosylmethionine:tRNA ribosyltransferase-isomerase, found in Ralstonia nicotianae (strain ATCC BAA-1114 / GMI1000) (Ralstonia solanacearum).